The primary structure comprises 154 residues: Myoglobin (154 aa).

The Globin domain maps to 2–148 (GLSDGEWQLV…FRNDIAAKYK (147 aa)). Ser-4 carries the phosphoserine modification. His-65 contributes to the nitrite binding site. His-65 is a binding site for O2. Phosphothreonine is present on residues Thr-68 and Thr-75. His-94 provides a ligand contact to heme b. Phosphoserine is present on Ser-121.

It belongs to the globin family. As to quaternary structure, monomeric.

It is found in the cytoplasm. The protein localises to the sarcoplasm. It catalyses the reaction Fe(III)-heme b-[protein] + nitric oxide + H2O = Fe(II)-heme b-[protein] + nitrite + 2 H(+). It carries out the reaction H2O2 + AH2 = A + 2 H2O. In terms of biological role, monomeric heme protein which primary function is to store oxygen and facilitate its diffusion within muscle tissues. Reversibly binds oxygen through a pentacoordinated heme iron and enables its timely and efficient release as needed during periods of heightened demand. Depending on the oxidative conditions of tissues and cells, and in addition to its ability to bind oxygen, it also has a nitrite reductase activity whereby it regulates the production of bioactive nitric oxide. Under stress conditions, like hypoxia and anoxia, it also protects cells against reactive oxygen species thanks to its pseudoperoxidase activity. The polypeptide is Myoglobin (Mus musculus (Mouse)).